Consider the following 396-residue polypeptide: Putative nickel insertion protein (396 aa).

This sequence belongs to the LarC family.

The polypeptide is Putative nickel insertion protein (Methanosarcina barkeri (strain Fusaro / DSM 804)).